Reading from the N-terminus, the 277-residue chain is Outer membrane lipoprotein 1 (277 aa).

The N-terminal stretch at 1 to 19 is a signal peptide; that stretch reads MSFKKILGVALVSALALTA. Residue C20 is the site of N-palmitoyl cysteine attachment. C20 is lipidated: S-diacylglycerol cysteine.

This sequence belongs to the NlpA lipoprotein family.

The protein localises to the cell outer membrane. The sequence is that of Outer membrane lipoprotein 1 (plpA) from Mannheimia haemolytica (Pasteurella haemolytica).